We begin with the raw amino-acid sequence, 386 residues long: Skeletal aspartic acid-rich protein 1 (386 aa).

An N-terminal signal peptide occupies residues 1–24 (MAFVSCFHLRLLFLCLALFMAAEC). Disordered stretches follow at residues 33-145 (VDSD…PFSL) and 244-291 (EVTD…DCPH). Over residues 63–107 (YDASDDNDNDNDDDDNNDNDNDNDDDNDVDRDNDNDDDDFDDSND) the composition is skewed to acidic residues. Composition is skewed to basic and acidic residues over residues 133-142 (HSVESFEDRP) and 244-265 (EVTD…KDTP). The segment covering 266 to 288 (DTDSDPDDSSDNANDGDDDDDDD) has biased composition (acidic residues).

Component of the acid-insoluble and acid-soluble organic matrix of the aragonitic skeleton (at protein level).

The protein resides in the secreted. The chain is Skeletal aspartic acid-rich protein 1 from Acropora millepora (Staghorn coral).